A 119-amino-acid chain; its full sequence is uncharacterized protein (119 aa).

The interval 64–119 is disordered; sequence SAPLGLKEVQKKSNEGLNEVQGAADINKQKRPANSQDSSSVEGDIQNFLEKVTGKN. Over residues 95–104 the composition is skewed to polar residues; the sequence is PANSQDSSSV.

This is an uncharacterized protein from Nostoc sp. (strain PCC 7120 / SAG 25.82 / UTEX 2576).